Consider the following 1721-residue polypeptide: Latent-transforming growth factor beta-binding protein 1 (1721 aa).

Positions 1–23 (MAGAWLRWGLLLWAGLLASSAHG) are cleaved as a signal peptide. The segment covering 64-81 (RSSAAAGAPSRASPGVPS) has biased composition (low complexity). The disordered stretch occupies residues 64–158 (RSSAAAGAPS…SGGGSRLQVH (95 aa)). Positions 99-111 (RPPPPPPPEPARP) are enriched in pro residues. The span at 112–130 (AVPGGQLHPNPGGHPAAAP) shows a compositional bias: low complexity. One can recognise an EGF-like 1 domain in the interval 187 to 219 (TKPSCVPPCQNGGMCLRPQLCVCKPGTKGKACE). 3 disulfide bridges follow: Cys-191/Cys-201, Cys-195/Cys-207, and Cys-209/Cys-218. The segment at 228-259 (SPVFGGQSPGAASSWGPPEQAAKHTSSKKADT) is disordered. N-linked (GlcNAc...) asparagine glycosylation is found at Asn-347 and Asn-378. Positions 399 to 431 (RVVICHLPCMNGGQCSSRDKCQCPPNFTGKLCQ) constitute an EGF-like 2 domain. Intrachain disulfides connect Cys-403/Cys-413, Cys-407/Cys-419, Cys-421/Cys-430, Cys-559/Cys-581, Cys-568/Cys-594, and Cys-582/Cys-597. N-linked (GlcNAc...) asparagine glycosylation is present at Asn-424. In terms of domain architecture, TB 1 spans 557 to 609 (GRCFQETIGSQCGKALPGLSKQEDCCGTVGTSWGFNKCQKCPKKPSYHGYNQM). Asn-620 is a glycosylation site (N-linked (GlcNAc...) asparagine). Residues 626–663 (DINECQLQGVCPNGECLNTMGSYRCTCKIGFGPDPTFS) enclose the EGF-like 3; calcium-binding domain. Intrachain disulfides connect Cys-630-Cys-641, Cys-636-Cys-650, Cys-652-Cys-665, Cys-679-Cys-702, Cys-689-Cys-714, Cys-703-Cys-717, and Cys-704-Cys-729. O-linked (Glc) serine glycosylation is present at Ser-647. The TB 2 domain occupies 677–729 (GPCYRLVSSGRQCMHPLSVHLTKQLCCCSVGKAWGPHCEKCPLPGTAAFKEIC). The disordered stretch occupies residues 750–811 (VGKGPVFVKP…APPEKEIPSL (62 aa)). O-linked (GalNAc...) threonine glycosylation is found at Thr-769 and Thr-801. In terms of domain architecture, EGF-like 4; calcium-binding spans 873 to 910 (EINECTVNPDICGAGHCINLPVRYTCICYEGYRFSEQQ). Disulfide bonds link Cys-877/Cys-889, Cys-884/Cys-898, Cys-900/Cys-913, Cys-919/Cys-931, Cys-926/Cys-940, Cys-942/Cys-955, Cys-961/Cys-972, Cys-967/Cys-981, Cys-984/Cys-996, Cys-1002/Cys-1013, Cys-1008/Cys-1022, Cys-1025/Cys-1036, Cys-1042/Cys-1053, Cys-1048/Cys-1062, Cys-1064/Cys-1077, Cys-1083/Cys-1094, Cys-1089/Cys-1103, Cys-1105/Cys-1118, Cys-1124/Cys-1135, Cys-1130/Cys-1144, Cys-1146/Cys-1159, Cys-1165/Cys-1177, Cys-1172/Cys-1186, Cys-1188/Cys-1200, Cys-1206/Cys-1218, Cys-1212/Cys-1227, Cys-1229/Cys-1242, Cys-1248/Cys-1260, and Cys-1254/Cys-1269. Residues 915–956 (DIDECTQVQHLCSQGRCENTEGSFLCICPAGFMASEEGTNCI) form the EGF-like 5; calcium-binding domain. The O-linked (Glc) serine glycan is linked to Ser-937. The EGF-like 6; calcium-binding domain maps to 957–997 (DVDECLRPDVCGEGHCVNTVGAFRCEYCDSGYRMTQRGRCE). Position 974 is a (3R)-3-hydroxyasparagine (Asn-974). The 40-residue stretch at 998–1037 (DIDECLNPSTCPDEQCVNSPGSYQCVPCTEGFRGWNGQCL) folds into the EGF-like 7; calcium-binding domain. Ser-1019 is a glycosylation site (O-linked (Glc) serine). The EGF-like 8; calcium-binding domain occupies 1038 to 1078 (DVDECLEPNVCANGDCSNLEGSYMCSCHKGYTRTPDHKHCR). An O-linked (Glc) serine glycan is attached at Ser-1059. The EGF-like 9; calcium-binding domain occupies 1079–1119 (DIDECQQGNLCVNGQCKNTEGSFRCTCGQGYQLSAAKDQCE). Positions 1120-1160 (DIDECQHRHLCAHGQCRNTEGSFQCVCDQGYRASGLGDHCE) constitute an EGF-like 10; calcium-binding domain. A (3R)-3-hydroxyasparagine modification is found at Asn-1137. The O-linked (Glc) serine glycan is linked to Ser-1141. The 41-residue stretch at 1161–1201 (DINECLEDKSVCQRGDCINTAGSYDCTCPDGFQLDDNKTCQ) folds into the EGF-like 11; calcium-binding domain. Positions 1174–1176 (RGD) match the Cell attachment site motif. An N-linked (GlcNAc...) asparagine glycan is attached at Asn-1197. Residues 1202–1243 (DINECEHPGLCGPQGECLNTEGSFHCVCQQGFSISADGRTCE) enclose the EGF-like 12; calcium-binding domain. O-linked (Glc) serine glycosylation occurs at Ser-1224. Positions 1244-1281 (DIDECVNNTVCDSHGFCDNTAGSFRCLCYQGFQAPQDG) constitute an EGF-like 13; calcium-binding domain. N-linked (GlcNAc...) asparagine glycosylation occurs at Asn-1250. The EGF-like 14; calcium-binding domain maps to 1286 to 1328 (DVNECELLSGVCGEAFCENVEGSFLCVCADENQEYSPMTGQCR). The interval 1344 to 1411 (EEKKECYYNL…PKGKGFVPAG (68 aa)) is 8-Cys3 region. Residues 1347–1401 (KECYYNLNDASLCDNVLAPNVTKQECCCTSGVGWGDNCEIFPCPVLGTAEFTEMC) form the TB 3 domain. Cystine bridges form between Cys-1349/Cys-1372, Cys-1359/Cys-1384, Cys-1373/Cys-1389, and Cys-1374/Cys-1401. Asn-1366 carries N-linked (GlcNAc...) asparagine glycosylation. Residue Ser-1414 is modified to Phosphoserine; by FAM20C. An EGF-like 15; calcium-binding domain is found at 1424 to 1466 (DADECLLFGQEICKNGFCLNTRPGYECYCKQGTYYDPVKLQCF). An EGF-like 16; calcium-binding domain is found at 1467-1503 (DMDECQDPSSCIDGQCVNTEGSYNCFCTHPMVLDASE). 6 disulfides stabilise this stretch: Cys-1471–Cys-1482, Cys-1477–Cys-1491, Cys-1526–Cys-1550, Cys-1536–Cys-1562, Cys-1551–Cys-1565, and Cys-1552–Cys-1577. A glycan (O-linked (Glc) serine) is linked at Ser-1488. Residues 1507 to 1721 (IRPAESNEQI…LNLEKDSDLE (215 aa)) are C-terminal domain. One can recognise a TB 4 domain in the interval 1524 to 1577 (DLCWEHLSDEYVCSRPLVGKQTTYTECCCLYGEAWGMQCALCPLKDSDDYAQLC). Phosphoserine occurs at positions 1597 and 1616. Residues 1621-1657 (QAEECGILNGCENGRCVRVQEGYTCDCFDGYHLDTAK) enclose the EGF-like 17 domain. 5 disulfides stabilise this stretch: Cys-1625–Cys-1636, Cys-1631–Cys-1645, Cys-1666–Cys-1681, Cys-1676–Cys-1690, and Cys-1692–Cys-1705. An EGF-like 18; calcium-binding domain is found at 1662–1706 (DVNECDELNNRMSLCKNAKCINTDGSYKCLCLPGYVPSDKPNYCT). An O-linked (Glc) serine glycan is attached at Ser-1687.

Belongs to the LTBP family. As to quaternary structure, interacts with TGFB1; associates via disulfide bonds with the Latency-associated peptide chain (LAP) regulatory chain of TGFB1, leading to regulate activation of TGF-beta-1. LTBP1 does not bind directly to TGF-beta-1, the active chain of TGFB1. Interacts (via C-terminal domain) with FBN1 (via N-terminal domain). Interacts with FBN2. Interacts with ADAMTSL2. Interacts with EFEMP2. Contains hydroxylated asparagine residues. Post-translationally, isoform Short N-terminus is blocked. In terms of processing, two intrachain disulfide bonds from the TB3 domain are rearranged upon TGFB1 binding, and form interchain bonds with TGFB1 propeptide, anchoring it to the extracellular matrix. O-glycosylated on serine residues by POGLUT2 and POGLUT3. In terms of tissue distribution, expressed in the aorta (at protein level). Isoform Long: Expressed in fibroblasts.

The protein localises to the secreted. Its subcellular location is the extracellular space. It localises to the extracellular matrix. Its function is as follows. Key regulator of transforming growth factor beta (TGFB1, TGFB2 and TGFB3) that controls TGF-beta activation by maintaining it in a latent state during storage in extracellular space. Associates specifically via disulfide bonds with the Latency-associated peptide (LAP), which is the regulatory chain of TGF-beta, and regulates integrin-dependent activation of TGF-beta. Outcompeted by LRRC32/GARP for binding to LAP regulatory chain of TGF-beta. This chain is Latent-transforming growth factor beta-binding protein 1, found in Homo sapiens (Human).